Consider the following 2148-residue polypeptide: Polyketide synthase 1 (2148 aa).

The segment at 19–261 (FIFGDQSSCN…TPLAVHAPYH (243 aa)) is N-terminal acylcarrier protein transacylase domain (SAT). Residues 394–829 (ESKIAIIGMS…GGNTALLVED (436 aa)) form the Ketosynthase family 3 (KS3) domain. Residues Cys-566, His-701, and His-745 each act as for beta-ketoacyl synthase activity in the active site. A malonyl-CoA:ACP transacylase (MAT) domain region spans residues 929–1233 (AFVFSGQGSQ…PSLMRNKDGW (305 aa)). Ser-1018 functions as the For acyl/malonyl transferase activity in the catalytic mechanism. Positions 1310–1624 (TASVHRIVHE…RKVLNTAMPP (315 aa)) are product template (PT) domain. The tract at residues 1314 to 1447 (HRIVHESVDK…SSLHFEQPKV (134 aa)) is N-terminal hotdog fold. Positions 1314–1619 (HRIVHESVDK…FQGIPRKVLN (306 aa)) constitute a PKS/mFAS DH domain. His-1346 acts as the Proton acceptor; for dehydratase activity in catalysis. Positions 1474 to 1619 (LNSRMSSGVI…FQGIPRKVLN (146 aa)) are C-terminal hotdog fold. Residue Asp-1533 is the Proton donor; for dehydratase activity of the active site. Residues 1619 to 1657 (NTAMPPPKSQNEAPVRSAPAKPAAKPPKSASSEHSGHFA) are disordered. A compositionally biased stretch (low complexity) spans 1635-1650 (SAPAKPAAKPPKSASS). One can recognise a Carrier 1 domain in the interval 1678–1752 (RNPMLAVFKI…DLATHLGLDT (75 aa)). Position 1712 is an O-(pantetheine 4'-phosphoryl)serine (Ser-1712). Low complexity predominate over residues 1755–1790 (SDQSSGQSSSSGGLSPRSDSIGEITSSATTPPSLSP). The tract at residues 1755-1796 (SDQSSGQSSSSGGLSPRSDSIGEITSSATTPPSLSPRGSVSG) is disordered. Residues 1793–1870 (SVSGSQCKDV…SFKHMFQQGH (78 aa)) form the Carrier 2 domain. Ser-1830 carries the post-translational modification O-(pantetheine 4'-phosphoryl)serine. Positions 1882 to 2146 (LKQYRATSTL…ERVAAFIRST (265 aa)) are thioesterase (TE) domain. Ser-1973 functions as the For thioesterase activity in the catalytic mechanism.

Functionally, polyketide synthase; part of the Pks1 gene cluster that mediates the biosynthesis of an anthraquinone derivative pigment that contributes to conidial pigmentation that provides protection from UV radiation, heat and cold stress. The polyketide synthase Pks1 produces 1-acetyl-2,4,6,8-tetrahydroxy-9,10-anthraquinone though condensation of acetyl-CoA with malonyl-CoA. The dehydratase EthD and the laccase Mlac1 further convert the anthraquinone derivative into the final conidial pigment. This chain is Polyketide synthase 1, found in Metarhizium guizhouense (strain ARSEF 977).